The primary structure comprises 297 residues: tRNA dimethylallyltransferase (297 aa).

ATP is bound at residue 10-17 (APTGAGKT). 12-17 (TGAGKT) provides a ligand contact to substrate. The interaction with substrate tRNA stretch occupies residues 34 to 37 (DSRQ).

This sequence belongs to the IPP transferase family. As to quaternary structure, monomer. Mg(2+) is required as a cofactor.

It carries out the reaction adenosine(37) in tRNA + dimethylallyl diphosphate = N(6)-dimethylallyladenosine(37) in tRNA + diphosphate. Catalyzes the transfer of a dimethylallyl group onto the adenine at position 37 in tRNAs that read codons beginning with uridine, leading to the formation of N6-(dimethylallyl)adenosine (i(6)A). The chain is tRNA dimethylallyltransferase from Leptospira interrogans serogroup Icterohaemorrhagiae serovar Lai (strain 56601).